Reading from the N-terminus, the 968-residue chain is RNA polymerase-associated protein RapA (968 aa).

Residues 164–334 (EVGQRHAPRV…FARLRLLDPN (171 aa)) form the Helicase ATP-binding domain. 177 to 184 (DEVGLGKT) is an ATP binding site. Residues 280-283 (DEAH) carry the DEAH box motif. Positions 493–644 (WLVDFLLDLR…TCPTGRALYD (152 aa)) constitute a Helicase C-terminal domain.

The protein belongs to the SNF2/RAD54 helicase family. RapA subfamily. In terms of assembly, interacts with the RNAP. Has a higher affinity for the core RNAP than for the holoenzyme. Its ATPase activity is stimulated by binding to RNAP.

Transcription regulator that activates transcription by stimulating RNA polymerase (RNAP) recycling in case of stress conditions such as supercoiled DNA or high salt concentrations. Probably acts by releasing the RNAP, when it is trapped or immobilized on tightly supercoiled DNA. Does not activate transcription on linear DNA. Probably not involved in DNA repair. The polypeptide is RNA polymerase-associated protein RapA (Sodalis glossinidius (strain morsitans)).